The chain runs to 170 residues: Small ribosomal subunit protein uS13 (170 aa).

Basic residues predominate over residues 128-140; the sequence is VRHKRGQKVRGQR. A disordered region spans residues 128 to 170; the sequence is VRHKRGQKVRGQRTKSTGRTEGTIGVNVEAIKEEQAEDGGDEE.

This sequence belongs to the universal ribosomal protein uS13 family. In terms of assembly, part of the 30S ribosomal subunit. Forms a loose heterodimer with protein S19. Forms two bridges to the 50S subunit in the 70S ribosome.

Functionally, located at the top of the head of the 30S subunit, it contacts several helices of the 16S rRNA. In the 70S ribosome it contacts the 23S rRNA (bridge B1a) and protein L5 of the 50S subunit (bridge B1b), connecting the 2 subunits; these bridges are implicated in subunit movement. In Natronomonas pharaonis (strain ATCC 35678 / DSM 2160 / CIP 103997 / JCM 8858 / NBRC 14720 / NCIMB 2260 / Gabara) (Halobacterium pharaonis), this protein is Small ribosomal subunit protein uS13.